A 348-amino-acid chain; its full sequence is Uroporphyrinogen decarboxylase (348 aa).

Residues 27–31, Phe-46, Asp-76, Tyr-152, Ser-207, and His-320 each bind substrate; that span reads RQAGR.

The protein belongs to the uroporphyrinogen decarboxylase family. Homodimer.

The protein localises to the cytoplasm. The catalysed reaction is uroporphyrinogen III + 4 H(+) = coproporphyrinogen III + 4 CO2. Its pathway is porphyrin-containing compound metabolism; protoporphyrin-IX biosynthesis; coproporphyrinogen-III from 5-aminolevulinate: step 4/4. Its function is as follows. Catalyzes the decarboxylation of four acetate groups of uroporphyrinogen-III to yield coproporphyrinogen-III. The chain is Uroporphyrinogen decarboxylase from Bacillus cytotoxicus (strain DSM 22905 / CIP 110041 / 391-98 / NVH 391-98).